A 162-amino-acid polypeptide reads, in one-letter code: 6,7-dimethyl-8-ribityllumazine synthase (162 aa).

5-amino-6-(D-ribitylamino)uracil contacts are provided by residues Phe-22, 56-58 (TFE), and 80-82 (AVI). Residue 85-86 (GT) participates in (2S)-2-hydroxy-3-oxobutyl phosphate binding. His-88 (proton donor) is an active-site residue. Met-113 provides a ligand contact to 5-amino-6-(D-ribitylamino)uracil. Arg-127 serves as a coordination point for (2S)-2-hydroxy-3-oxobutyl phosphate.

It belongs to the DMRL synthase family.

It catalyses the reaction (2S)-2-hydroxy-3-oxobutyl phosphate + 5-amino-6-(D-ribitylamino)uracil = 6,7-dimethyl-8-(1-D-ribityl)lumazine + phosphate + 2 H2O + H(+). It functions in the pathway cofactor biosynthesis; riboflavin biosynthesis; riboflavin from 2-hydroxy-3-oxobutyl phosphate and 5-amino-6-(D-ribitylamino)uracil: step 1/2. Functionally, catalyzes the formation of 6,7-dimethyl-8-ribityllumazine by condensation of 5-amino-6-(D-ribitylamino)uracil with 3,4-dihydroxy-2-butanone 4-phosphate. This is the penultimate step in the biosynthesis of riboflavin. The polypeptide is 6,7-dimethyl-8-ribityllumazine synthase (Anaeromyxobacter dehalogenans (strain 2CP-C)).